Consider the following 469-residue polypeptide: Cyclin-dependent kinase 14 (469 aa).

Residues Ser-24, Ser-78, and Ser-95 each carry the phosphoserine modification. Positions 103–133 are disordered; the sequence is FKSSSAGKESPKVRRHSSPSSPTSPKFGKAD. Ser-134 carries the phosphoserine modification. The Protein kinase domain occupies 135 to 419; sequence YEKLEKLGEG…AQAALSHEYF (285 aa). ATP is bound by residues 141–149 and Lys-164; that span reads LGEGSYATV. Asp-256 acts as the Proton acceptor in catalysis. Residues 449–469 are disordered; it reads ESMRAFGKNNSYGKSLSNSKH. Residues 456–469 are compositionally biased toward polar residues; sequence KNNSYGKSLSNSKH.

It belongs to the protein kinase superfamily. CMGC Ser/Thr protein kinase family. CDC2/CDKX subfamily. Found in a complex with LRP6, CCNY and CAPRIN2 during G2/M stage; CAPRIN2 functions as a scaffold for the complex by binding to CCNY via its N terminus and to CDK14 via its C terminus. Interacts with CCNY; CCNY mediates its recruitment to the plasma membrane and promotes phosphorylation of LRP6. Interacts with CCDN3 and CDKN1A. Interacts with SEPT8. Interacts with 14-3-3 proteina YWHAB, YWHAE, YWHAH and YWHAQ. In terms of tissue distribution, in the adult, widely expressed at low levels except in brain, kidney and testis where expression is high. In the brain, detected in cortex, hippocampus, dentate gyrus, amygdala cortex, parasubiculum and cerebellum. In the embryo, expressed predominantly in the nervous system.

It is found in the cell membrane. Its subcellular location is the cytoplasm. The protein resides in the nucleus. It carries out the reaction L-seryl-[protein] + ATP = O-phospho-L-seryl-[protein] + ADP + H(+). The enzyme catalyses L-threonyl-[protein] + ATP = O-phospho-L-threonyl-[protein] + ADP + H(+). Serine/threonine-protein kinase activity is promoted by associated cyclins CCDN3 and CCNY and repressed by CDKN1A. In terms of biological role, serine/threonine-protein kinase involved in the control of the eukaryotic cell cycle, whose activity is controlled by an associated cyclin. Acts as a cell-cycle regulator of Wnt signaling pathway during G2/M phase by mediating the phosphorylation of LRP6 at 'Ser-1490', leading to the activation of the Wnt signaling pathway. Acts as a regulator of cell cycle progression and cell proliferation via its interaction with CCDN3. Phosphorylates RB1 in vitro, however the relevance of such result remains to be confirmed in vivo. May also play a role in meiosis, neuron differentiation and may indirectly act as a negative regulator of insulin-responsive glucose transport. This chain is Cyclin-dependent kinase 14 (Cdk14), found in Mus musculus (Mouse).